A 55-amino-acid chain; its full sequence is Large ribosomal subunit protein bL33 (55 aa).

Belongs to the bacterial ribosomal protein bL33 family.

In Pseudarthrobacter chlorophenolicus (strain ATCC 700700 / DSM 12829 / CIP 107037 / JCM 12360 / KCTC 9906 / NCIMB 13794 / A6) (Arthrobacter chlorophenolicus), this protein is Large ribosomal subunit protein bL33.